We begin with the raw amino-acid sequence, 302 residues long: MGHKAGFVALVGRTNVGKSTLLNAILQEKIAITSPKPQTTRNTIRGILTTDEYQVIFVDTPGIHKPKSKLSEFMIEVAKRTLKEVDLILYMIEPDTEVGPGDRYIIEHLKEVDTPVILVVNKIDLVPEKRVEETIKIFKEQYEFKDVVAISAIENKNIDLLKEKIVSLLPEGPKYYLDDYITDQPEKLIVAEIIREKMLHFLEEEVPHGVYVEVESIKEREDKDIIDIEAYIYCEKESHKGIIIGKNGQMLKKIGQSARLDLEEFYGKQVFLDLWVKTRKGWRDNTTLLKKLGYAIDKKTYE.

Positions 4 to 171 (KAGFVALVGR…KEKIVSLLPE (168 aa)) constitute an Era-type G domain. Positions 12–19 (GRTNVGKS) are G1. Residue 12–19 (GRTNVGKS) participates in GTP binding. A G2 region spans residues 38–42 (QTTRN). The interval 59-62 (DTPG) is G3. GTP contacts are provided by residues 59–63 (DTPGI) and 121–124 (NKID). The interval 121–124 (NKID) is G4. A G5 region spans residues 150–152 (ISA). Residues 202–280 (LEEEVPHGVY…FLDLWVKTRK (79 aa)) enclose the KH type-2 domain.

This sequence belongs to the TRAFAC class TrmE-Era-EngA-EngB-Septin-like GTPase superfamily. Era GTPase family. Monomer.

Its subcellular location is the cytoplasm. It is found in the cell membrane. An essential GTPase that binds both GDP and GTP, with rapid nucleotide exchange. Plays a role in 16S rRNA processing and 30S ribosomal subunit biogenesis and possibly also in cell cycle regulation and energy metabolism. This is GTPase Era from Thermoanaerobacter pseudethanolicus (strain ATCC 33223 / 39E) (Clostridium thermohydrosulfuricum).